The chain runs to 278 residues: HTH-type transcriptional activator RhaS (278 aa).

Positions 174 to 272 (NLLLAWLEDH…NWSPRDIRQG (99 aa)) constitute an HTH araC/xylS-type domain. 2 DNA-binding regions (H-T-H motif) span residues 191–212 (DAVA…KQQT) and 239–262 (VTDI…RREF).

In terms of assembly, binds DNA as a dimer.

It localises to the cytoplasm. Activates expression of the rhaBAD and rhaT operons. In Escherichia coli O81 (strain ED1a), this protein is HTH-type transcriptional activator RhaS.